Here is a 261-residue protein sequence, read N- to C-terminus: Cytochrome c oxidase subunit 3 (261 aa).

The Mitochondrial matrix portion of the chain corresponds to 1–15 (MTHQTHAYHMVNPSP). Residues 16–34 (WPLTGALSALLMTSGLTMW) form a helical membrane-spanning segment. Over 35 to 40 (FHFNSM) the chain is Mitochondrial intermembrane. A helical membrane pass occupies residues 41 to 66 (LLLSLGLLTNTLTMYQWWRDIIREST). Topologically, residues 67–72 (FQGHHT) are mitochondrial matrix. A helical membrane pass occupies residues 73–105 (SVVQKGLRYGMILFIISEVLFFTGFFWAFYHSS). At 106 to 128 (LAPTPELGGCWPPTGIHPLNPLE) the chain is on the mitochondrial intermembrane side. A helical membrane pass occupies residues 129–152 (VPLLNTSILLASGVSITWAHHSLM). At 153 to 155 (EGD) the chain is on the mitochondrial matrix side. Residues 156-183 (RKHMIQALSITIALGVYFTLLQASEYYE) traverse the membrane as a helical segment. Topologically, residues 184-190 (APFTISD) are mitochondrial intermembrane. The chain crosses the membrane as a helical span at residues 191-223 (GVYGSTFFVATGFHGLHVIIGSTFLAVCLLRQL). The Mitochondrial matrix segment spans residues 224–232 (KFHFTSNHH). The helical transmembrane segment at 233–256 (FGFEAAAWYWHFVDVVWLFLYVSI) threads the bilayer. The Mitochondrial intermembrane segment spans residues 257 to 261 (YWWGS).

Belongs to the cytochrome c oxidase subunit 3 family. Component of the cytochrome c oxidase (complex IV, CIV), a multisubunit enzyme composed of 14 subunits. The complex is composed of a catalytic core of 3 subunits MT-CO1, MT-CO2 and MT-CO3, encoded in the mitochondrial DNA, and 11 supernumerary subunits COX4I, COX5A, COX5B, COX6A, COX6B, COX6C, COX7A, COX7B, COX7C, COX8 and NDUFA4, which are encoded in the nuclear genome. The complex exists as a monomer or a dimer and forms supercomplexes (SCs) in the inner mitochondrial membrane with NADH-ubiquinone oxidoreductase (complex I, CI) and ubiquinol-cytochrome c oxidoreductase (cytochrome b-c1 complex, complex III, CIII), resulting in different assemblies (supercomplex SCI(1)III(2)IV(1) and megacomplex MCI(2)III(2)IV(2)).

It is found in the mitochondrion inner membrane. The enzyme catalyses 4 Fe(II)-[cytochrome c] + O2 + 8 H(+)(in) = 4 Fe(III)-[cytochrome c] + 2 H2O + 4 H(+)(out). Component of the cytochrome c oxidase, the last enzyme in the mitochondrial electron transport chain which drives oxidative phosphorylation. The respiratory chain contains 3 multisubunit complexes succinate dehydrogenase (complex II, CII), ubiquinol-cytochrome c oxidoreductase (cytochrome b-c1 complex, complex III, CIII) and cytochrome c oxidase (complex IV, CIV), that cooperate to transfer electrons derived from NADH and succinate to molecular oxygen, creating an electrochemical gradient over the inner membrane that drives transmembrane transport and the ATP synthase. Cytochrome c oxidase is the component of the respiratory chain that catalyzes the reduction of oxygen to water. Electrons originating from reduced cytochrome c in the intermembrane space (IMS) are transferred via the dinuclear copper A center (CU(A)) of subunit 2 and heme A of subunit 1 to the active site in subunit 1, a binuclear center (BNC) formed by heme A3 and copper B (CU(B)). The BNC reduces molecular oxygen to 2 water molecules using 4 electrons from cytochrome c in the IMS and 4 protons from the mitochondrial matrix. This Sus scrofa (Pig) protein is Cytochrome c oxidase subunit 3 (MT-CO3).